The sequence spans 311 residues: MRTIKVGSRRSKLAITQTKWVIQKLSELNPSYSFEIKEIVTKGDQILDVTLSKVGGKGLFVKEIEQAMLNHDIDMAVHSMKDMPAALPEGLVIGCIPEREDVRDALISKDHLHLHELPKGAIVGTSSLRRSAQLLQERPDLNIKWIRGNIDTRLEKLKNEEYDAIILAAAGLSRMGWSKEVVSEFLSPETCLPAVGQGALSIECRGDDEELLQLLAQFTNEYTKKTVLAERAFLKQMDGSCQVPIAGYATMNERDEIELTGLVASADGHTIIRETVSGTDPEAIGTACAKQMADKGAKDLIDKVKKDLSSQ.

Cysteine 241 carries the S-(dipyrrolylmethanemethyl)cysteine modification.

This sequence belongs to the HMBS family. In terms of assembly, monomer. The cofactor is dipyrromethane.

The enzyme catalyses 4 porphobilinogen + H2O = hydroxymethylbilane + 4 NH4(+). It functions in the pathway porphyrin-containing compound metabolism; protoporphyrin-IX biosynthesis; coproporphyrinogen-III from 5-aminolevulinate: step 2/4. Functionally, tetrapolymerization of the monopyrrole PBG into the hydroxymethylbilane pre-uroporphyrinogen in several discrete steps. The polypeptide is Porphobilinogen deaminase (Bacillus pumilus (strain SAFR-032)).